We begin with the raw amino-acid sequence, 279 residues long: Digeranylgeranylglyceryl phosphate synthase (279 aa).

8 helical membrane-spanning segments follow: residues 5–25, 27–47, 90–110, 127–147, 148–168, 198–218, 219–239, and 259–279; these read GFFA…AIVA, LIAT…VLLV, FLLG…IALV, FFGN…GGAY, AGWH…LAML, KTAL…AVPY, LWWG…ILFA, and TLLK…AVFL.

The protein belongs to the UbiA prenyltransferase family. DGGGP synthase subfamily. Mg(2+) is required as a cofactor.

The protein localises to the cell membrane. It catalyses the reaction sn-3-O-(geranylgeranyl)glycerol 1-phosphate + (2E,6E,10E)-geranylgeranyl diphosphate = 2,3-bis-O-(geranylgeranyl)-sn-glycerol 1-phosphate + diphosphate. It participates in membrane lipid metabolism; glycerophospholipid metabolism. Prenyltransferase that catalyzes the transfer of the geranylgeranyl moiety of geranylgeranyl diphosphate (GGPP) to the C2 hydroxyl of (S)-3-O-geranylgeranylglyceryl phosphate (GGGP). This reaction is the second ether-bond-formation step in the biosynthesis of archaeal membrane lipids. The chain is Digeranylgeranylglyceryl phosphate synthase from Methanoregula boonei (strain DSM 21154 / JCM 14090 / 6A8).